The sequence spans 102 residues: Large ribosomal subunit protein bL21 (102 aa).

A compositionally biased stretch (basic residues) spans 79-91 (RKDSKRKKGHRQP). Residues 79–102 (RKDSKRKKGHRQPYTKLTIDKINA) form a disordered region.

It belongs to the bacterial ribosomal protein bL21 family. In terms of assembly, part of the 50S ribosomal subunit. Contacts protein L20.

Functionally, this protein binds to 23S rRNA in the presence of protein L20. In Staphylococcus saprophyticus subsp. saprophyticus (strain ATCC 15305 / DSM 20229 / NCIMB 8711 / NCTC 7292 / S-41), this protein is Large ribosomal subunit protein bL21.